Reading from the N-terminus, the 448-residue chain is Trigger factor (448 aa).

Residues Ser173 to Pro258 form the PPIase FKBP-type domain.

This sequence belongs to the FKBP-type PPIase family. Tig subfamily.

Its subcellular location is the cytoplasm. The catalysed reaction is [protein]-peptidylproline (omega=180) = [protein]-peptidylproline (omega=0). In terms of biological role, involved in protein export. Acts as a chaperone by maintaining the newly synthesized protein in an open conformation. Functions as a peptidyl-prolyl cis-trans isomerase. The sequence is that of Trigger factor from Herminiimonas arsenicoxydans.